We begin with the raw amino-acid sequence, 471 residues long: 3-isopropylmalate dehydratase large subunit (471 aa).

[4Fe-4S] cluster contacts are provided by Cys-351, Cys-414, and Cys-417.

It belongs to the aconitase/IPM isomerase family. LeuC type 1 subfamily. Heterodimer of LeuC and LeuD. [4Fe-4S] cluster is required as a cofactor.

It catalyses the reaction (2R,3S)-3-isopropylmalate = (2S)-2-isopropylmalate. Its pathway is amino-acid biosynthesis; L-leucine biosynthesis; L-leucine from 3-methyl-2-oxobutanoate: step 2/4. Functionally, catalyzes the isomerization between 2-isopropylmalate and 3-isopropylmalate, via the formation of 2-isopropylmaleate. The protein is 3-isopropylmalate dehydratase large subunit of Colwellia psychrerythraea (strain 34H / ATCC BAA-681) (Vibrio psychroerythus).